Consider the following 77-residue polypeptide: UPF0291 protein RBAM_017680 (77 aa).

A disordered region spans residues 55–77 (IDPEGNDVTPEKLKREQQKNNLH). Residues 63–77 (TPEKLKREQQKNNLH) show a composition bias toward basic and acidic residues.

It belongs to the UPF0291 family.

Its subcellular location is the cytoplasm. This chain is UPF0291 protein RBAM_017680, found in Bacillus velezensis (strain DSM 23117 / BGSC 10A6 / LMG 26770 / FZB42) (Bacillus amyloliquefaciens subsp. plantarum).